Reading from the N-terminus, the 445-residue chain is Gamma-glutamyl phosphate reductase (445 aa).

It belongs to the gamma-glutamyl phosphate reductase family.

It localises to the cytoplasm. It carries out the reaction L-glutamate 5-semialdehyde + phosphate + NADP(+) = L-glutamyl 5-phosphate + NADPH + H(+). It functions in the pathway amino-acid biosynthesis; L-proline biosynthesis; L-glutamate 5-semialdehyde from L-glutamate: step 2/2. Catalyzes the NADPH-dependent reduction of L-glutamate 5-phosphate into L-glutamate 5-semialdehyde and phosphate. The product spontaneously undergoes cyclization to form 1-pyrroline-5-carboxylate. The polypeptide is Gamma-glutamyl phosphate reductase (Persephonella marina (strain DSM 14350 / EX-H1)).